The chain runs to 228 residues: Ribosomal RNA small subunit methyltransferase G (228 aa).

Residues G89, L94, V140 to E141, and R159 contribute to the S-adenosyl-L-methionine site.

The protein belongs to the methyltransferase superfamily. RNA methyltransferase RsmG family.

The protein resides in the cytoplasm. It catalyses the reaction guanosine(527) in 16S rRNA + S-adenosyl-L-methionine = N(7)-methylguanosine(527) in 16S rRNA + S-adenosyl-L-homocysteine. Its function is as follows. Specifically methylates the N7 position of guanine in position 527 of 16S rRNA. This Burkholderia vietnamiensis (strain G4 / LMG 22486) (Burkholderia cepacia (strain R1808)) protein is Ribosomal RNA small subunit methyltransferase G.